We begin with the raw amino-acid sequence, 334 residues long: D-fructose 1,6-bisphosphatase class 2/sedoheptulose 1,7-bisphosphatase (334 aa).

Mn(2+)-binding residues include D33, E57, D85, and E88. Residues 88–90 (EGT), Y119, 164–166 (RAR), and 186–188 (DGD) each bind substrate. Position 213 (E213) interacts with Mn(2+).

This sequence belongs to the FBPase class 2 family. In terms of assembly, homotetramer. The cofactor is Mn(2+).

The catalysed reaction is beta-D-fructose 1,6-bisphosphate + H2O = beta-D-fructose 6-phosphate + phosphate. The enzyme catalyses D-sedoheptulose 1,7-bisphosphate + H2O = D-sedoheptulose 7-phosphate + phosphate. It functions in the pathway carbohydrate biosynthesis; Calvin cycle. In terms of biological role, catalyzes the hydrolysis of fructose 1,6-bisphosphate (Fru 1,6-P2) and sedoheptulose 1,7-bisphosphate (Sed 1,7-P2) to fructose 6-phosphate and sedoheptulose 7-phosphate, respectively. The protein is D-fructose 1,6-bisphosphatase class 2/sedoheptulose 1,7-bisphosphatase of Prochlorococcus marinus (strain NATL1A).